A 324-amino-acid chain; its full sequence is tRNA N6-adenosine threonylcarbamoyltransferase (324 aa).

Positions 107, 111, and 127 each coordinate Fe cation. Residues 127–131 (YVSGG), D159, G172, E176, and N257 contribute to the substrate site. Residue D285 coordinates Fe cation.

Belongs to the KAE1 / TsaD family. In terms of assembly, monomer. Component of the KEOPS complex that consists of Kae1, Bud32, Cgi121 and Pcc1; the whole complex dimerizes. Fe(2+) serves as cofactor.

The protein resides in the cytoplasm. The catalysed reaction is L-threonylcarbamoyladenylate + adenosine(37) in tRNA = N(6)-L-threonylcarbamoyladenosine(37) in tRNA + AMP + H(+). Functionally, required for the formation of a threonylcarbamoyl group on adenosine at position 37 (t(6)A37) in tRNAs that read codons beginning with adenine. Is a component of the KEOPS complex that is probably involved in the transfer of the threonylcarbamoyl moiety of threonylcarbamoyl-AMP (TC-AMP) to the N6 group of A37. Kae1 likely plays a direct catalytic role in this reaction, but requires other protein(s) of the complex to fulfill this activity. The sequence is that of tRNA N6-adenosine threonylcarbamoyltransferase from Thermococcus sibiricus (strain DSM 12597 / MM 739).